A 901-amino-acid chain; its full sequence is MLIKMLTKVFGSRNDRTLRRMRKVVNIINGMEPAMEKLSDDELKAKTAEFRARLEKGEVLENLIPEAFAVVREASKRVFGMRHFDVQLLGGMVLNDRCIAEMRTGEGKTLTATLPAYLNALTGKGVHVVTVNDYLAQRDAENNRPLFEFLGMSVGINMSGLPAPAKREAYAADITYGTNNEYGFDYLRDNMAFSPEERVQRKLHYALVDEVDSILIDEARTPLIISGPAEDSSEMYRKVNKIIPHLIRQEKEDSDTFTGEGHFSVDEKARQVNLTERGLVLIEELLVQEGIMEEGESLYSPTNIMLMHHVTAALRAHALFTRDVDYIVKDGEVIIVDEHTGRTMQGRRWSDGLHQAVEAKEGVEIQNENQTLASITFQNYFRLYEKLAGMTGTADTEAFEFSSIYKLDTVVVPTNRPMIRKDMADLVYMTEAEKIQAIIEDIKTRTAAGQPVLVGTISIEKSEVVSRELTKAGIKHNVLNAKFHASEADIVAQAGYPAAVTIATNMAGRGTDIMLGGSWQAEVAALENPTAEQIEKIKADWQVRHDAVLAAGGLHIIGTERHESRRIDNQLRGRAGRQGDAGSSRFYLSMEDALMRIFASDRVSGMMRKLGMKPGEAIEHPWVTKAIANAQRKVESRNFDIRKQLLEYDDVANDQRRAIYTQRNELLDVSDVSETINSIREDVFKATIDAHIPPQSLEEMWDIEGLQERLKNDFDLELPIKEWLDKEPELHEETLRERILQSAVETYQRKEEVVGAEMMRHFEKGVMLQTLDSLWKEHLAAMDYLRQGIHLRGYAQKDPKQEYKRESFSMFAAMLESLKYEVISTLSKVQVRMPEEVEAMEQQRREEAERLAQMQQLSHQSDDEAAAEDLAAQTGERKVGRNDPCPCGSGKKYKQCHGRLS.

Residues glutamine 87, 105-109, and aspartate 512 contribute to the ATP site; that span reads GEGKT. Residues 852–901 are disordered; it reads AQMQQLSHQSDDEAAAEDLAAQTGERKVGRNDPCPCGSGKKYKQCHGRLS. Residues cysteine 885, cysteine 887, cysteine 896, and histidine 897 each coordinate Zn(2+). Positions 891-901 are enriched in basic residues; that stretch reads KKYKQCHGRLS.

It belongs to the SecA family. In terms of assembly, monomer and homodimer. Part of the essential Sec protein translocation apparatus which comprises SecA, SecYEG and auxiliary proteins SecDF-YajC and YidC. The cofactor is Zn(2+).

Its subcellular location is the cell inner membrane. It localises to the cytoplasm. The catalysed reaction is ATP + H2O + cellular proteinSide 1 = ADP + phosphate + cellular proteinSide 2.. Functionally, part of the Sec protein translocase complex. Interacts with the SecYEG preprotein conducting channel. Has a central role in coupling the hydrolysis of ATP to the transfer of proteins into and across the cell membrane, serving both as a receptor for the preprotein-SecB complex and as an ATP-driven molecular motor driving the stepwise translocation of polypeptide chains across the membrane. The protein is Protein translocase subunit SecA of Klebsiella pneumoniae (strain 342).